Reading from the N-terminus, the 634-residue chain is Chaperone protein HtpG (634 aa).

Positions 1 to 339 are a; substrate-binding; that stretch reads MAQETMSFQA…SADLPLNVSR (339 aa). The segment at 340–559 is b; it reads EILQESRDVK…DGEMSGYLQR (220 aa). The c stretch occupies residues 560 to 634; that stretch reads MLKAAGQQAP…ALLLARANEA (75 aa).

Belongs to the heat shock protein 90 family. In terms of assembly, homodimer.

It is found in the cytoplasm. Its function is as follows. Molecular chaperone. Has ATPase activity. This chain is Chaperone protein HtpG, found in Paraburkholderia xenovorans (strain LB400).